Consider the following 369-residue polypeptide: Peptide chain release factor 2 (369 aa).

The residue at position 252 (Gln252) is an N5-methylglutamine.

Belongs to the prokaryotic/mitochondrial release factor family. In terms of processing, methylated by PrmC. Methylation increases the termination efficiency of RF2.

It localises to the cytoplasm. Its function is as follows. Peptide chain release factor 2 directs the termination of translation in response to the peptide chain termination codons UGA and UAA. This chain is Peptide chain release factor 2, found in Staphylococcus aureus (strain MRSA252).